Here is a 309-residue protein sequence, read N- to C-terminus: Aspartate carbamoyltransferase catalytic subunit (309 aa).

Residues R55 and T56 each coordinate carbamoyl phosphate. K85 is a binding site for L-aspartate. Carbamoyl phosphate contacts are provided by R106, H135, and Q138. The L-aspartate site is built by R168 and R230. Carbamoyl phosphate is bound by residues L268 and P269.

The protein belongs to the aspartate/ornithine carbamoyltransferase superfamily. ATCase family. Heterododecamer (2C3:3R2) of six catalytic PyrB chains organized as two trimers (C3), and six regulatory PyrI chains organized as three dimers (R2).

The enzyme catalyses carbamoyl phosphate + L-aspartate = N-carbamoyl-L-aspartate + phosphate + H(+). It functions in the pathway pyrimidine metabolism; UMP biosynthesis via de novo pathway; (S)-dihydroorotate from bicarbonate: step 2/3. Catalyzes the condensation of carbamoyl phosphate and aspartate to form carbamoyl aspartate and inorganic phosphate, the committed step in the de novo pyrimidine nucleotide biosynthesis pathway. This Vibrio cholerae serotype O1 (strain ATCC 39541 / Classical Ogawa 395 / O395) protein is Aspartate carbamoyltransferase catalytic subunit.